Here is an 82-residue protein sequence, read N- to C-terminus: MAHKKGASSSRNGRDSNAKRLGVKRFAGQVVSAGEILVRQRGTRFHPGTNVRRGDDDTLFACASGRVRFGRSGKRRAVSVDT.

The tract at residues 1–21 (MAHKKGASSSRNGRDSNAKRL) is disordered.

Belongs to the bacterial ribosomal protein bL27 family.

This Tropheryma whipplei (strain TW08/27) (Whipple's bacillus) protein is Large ribosomal subunit protein bL27.